A 954-amino-acid chain; its full sequence is Xylanolytic transcriptional activator xlnR (954 aa).

Disordered stretches follow at residues 1 to 39 and 51 to 93; these read MSTTSLQHFPHSYSPFSSSRSLNRMAQSQTSGLDTLAEG and REAA…SQRD. The segment covering 8–21 has biased composition (low complexity); sequence HFPHSYSPFSSSRS. The span at 22–33 shows a compositional bias: polar residues; that stretch reads LNRMAQSQTSGL. Over residues 64–78 the composition is skewed to basic and acidic residues; it reads GKPKDQFQVDNDNHH. Residues 82–91 are compositionally biased toward polar residues; it reads SLSNFKNPSQ. The zn(2)-C6 fungal-type DNA-binding region spans 119–145; that stretch reads CDQCNQLRTKCDGQNPCAHCIEFGLTC. 4 disordered regions span residues 173 to 226, 312 to 332, 566 to 607, and 758 to 777; these read ATNS…HSEA, NPQEPNSTSISHFRLGSSTEN, ELPP…PGNT, and MDGSHPNHVSPSGRSSSTVE. A compositionally biased stretch (polar residues) spans 174–183; the sequence is TNSGQPNGSS. Basic and acidic residues predominate over residues 574–590; that stretch reads ARPDAERDGDPDADLSK. A compositionally biased stretch (polar residues) spans 764–777; that stretch reads NHVSPSGRSSSTVE.

This sequence belongs to the xlnR/xlr1 family.

It is found in the nucleus. Functionally, transcriptional activator of the xylanolytic system. Involved in the regulation of extracellular cellulolytic and xylanolytic genes and in the regulation of the intracellular activities of D-xylose catabolic genes in the pentose catabolic pathway (PCP) in response to the presence of D-xylose. The polypeptide is Xylanolytic transcriptional activator xlnR (xlnR) (Aspergillus fumigatus (strain CBS 144.89 / FGSC A1163 / CEA10) (Neosartorya fumigata)).